The primary structure comprises 277 residues: Uridine-cytidine kinase 1 (277 aa).

Residues 1 to 30 (MASAGGEDCESPAPEADRPHQRPFLIGVSG) are disordered. Residue 30–38 (GGTASGKST) participates in ATP binding. Asp65 is a catalytic residue. Positions 87, 115, 120, 169, 178, and 186 each coordinate substrate. Residue Asp215 participates in ATP binding. Positions 247–277 (SYKRTFSEPGDHPGMLTSGKRSHLESSSRPH) are disordered. At Thr251 the chain carries Phosphothreonine. Phosphoserine is present on Ser253. A compositionally biased stretch (basic and acidic residues) spans 268-277 (SHLESSSRPH).

The protein belongs to the uridine kinase family. As to expression, ubiquitous.

It carries out the reaction uridine + ATP = UMP + ADP + H(+). The catalysed reaction is cytidine + ATP = CMP + ADP + H(+). It functions in the pathway pyrimidine metabolism; CTP biosynthesis via salvage pathway; CTP from cytidine: step 1/3. The protein operates within pyrimidine metabolism; UMP biosynthesis via salvage pathway; UMP from uridine: step 1/1. Its function is as follows. Phosphorylates uridine and cytidine to uridine monophosphate and cytidine monophosphate. Does not phosphorylate deoxyribonucleosides or purine ribonucleosides. Can use ATP or GTP as a phosphate donor. Can also phosphorylate cytidine and uridine nucleoside analogs such as 6-azauridine, 5-fluorouridine, 4-thiouridine, 5-bromouridine, N(4)-acetylcytidine, N(4)-benzoylcytidine, 5-fluorocytidine, 2-thiocytidine, 5-methylcytidine, and N(4)-anisoylcytidine. The sequence is that of Uridine-cytidine kinase 1 (UCK1) from Homo sapiens (Human).